A 467-amino-acid chain; its full sequence is tRNA(Ile)-lysidine synthase (467 aa).

35-40 (SGGPDS) contacts ATP.

This sequence belongs to the tRNA(Ile)-lysidine synthase family.

The protein resides in the cytoplasm. It catalyses the reaction cytidine(34) in tRNA(Ile2) + L-lysine + ATP = lysidine(34) in tRNA(Ile2) + AMP + diphosphate + H(+). Functionally, ligates lysine onto the cytidine present at position 34 of the AUA codon-specific tRNA(Ile) that contains the anticodon CAU, in an ATP-dependent manner. Cytidine is converted to lysidine, thus changing the amino acid specificity of the tRNA from methionine to isoleucine. The chain is tRNA(Ile)-lysidine synthase from Caldanaerobacter subterraneus subsp. tengcongensis (strain DSM 15242 / JCM 11007 / NBRC 100824 / MB4) (Thermoanaerobacter tengcongensis).